The chain runs to 362 residues: Phosphoserine aminotransferase (362 aa).

L-glutamate is bound at residue Arg-43. Pyridoxal 5'-phosphate contacts are provided by residues 77–78, Trp-103, Thr-153, Asp-173, and Gln-196; that span reads AT. Lys-197 carries the post-translational modification N6-(pyridoxal phosphate)lysine. 238-239 contacts pyridoxal 5'-phosphate; sequence NT.

This sequence belongs to the class-V pyridoxal-phosphate-dependent aminotransferase family. SerC subfamily. As to quaternary structure, homodimer. The cofactor is pyridoxal 5'-phosphate.

The protein resides in the cytoplasm. The enzyme catalyses O-phospho-L-serine + 2-oxoglutarate = 3-phosphooxypyruvate + L-glutamate. It catalyses the reaction 4-(phosphooxy)-L-threonine + 2-oxoglutarate = (R)-3-hydroxy-2-oxo-4-phosphooxybutanoate + L-glutamate. Its pathway is amino-acid biosynthesis; L-serine biosynthesis; L-serine from 3-phospho-D-glycerate: step 2/3. It participates in cofactor biosynthesis; pyridoxine 5'-phosphate biosynthesis; pyridoxine 5'-phosphate from D-erythrose 4-phosphate: step 3/5. Catalyzes the reversible conversion of 3-phosphohydroxypyruvate to phosphoserine and of 3-hydroxy-2-oxo-4-phosphonooxybutanoate to phosphohydroxythreonine. This is Phosphoserine aminotransferase from Xylella fastidiosa (strain Temecula1 / ATCC 700964).